A 583-amino-acid polypeptide reads, in one-letter code: Proline--tRNA ligase (583 aa).

It belongs to the class-II aminoacyl-tRNA synthetase family. ProS type 1 subfamily. In terms of assembly, homodimer.

Its subcellular location is the cytoplasm. It catalyses the reaction tRNA(Pro) + L-proline + ATP = L-prolyl-tRNA(Pro) + AMP + diphosphate. In terms of biological role, catalyzes the attachment of proline to tRNA(Pro) in a two-step reaction: proline is first activated by ATP to form Pro-AMP and then transferred to the acceptor end of tRNA(Pro). As ProRS can inadvertently accommodate and process non-cognate amino acids such as alanine and cysteine, to avoid such errors it has two additional distinct editing activities against alanine. One activity is designated as 'pretransfer' editing and involves the tRNA(Pro)-independent hydrolysis of activated Ala-AMP. The other activity is designated 'posttransfer' editing and involves deacylation of mischarged Ala-tRNA(Pro). The misacylated Cys-tRNA(Pro) is not edited by ProRS. The chain is Proline--tRNA ligase from Methylococcus capsulatus (strain ATCC 33009 / NCIMB 11132 / Bath).